The chain runs to 456 residues: tRNA-2-methylthio-N(6)-dimethylallyladenosine synthase (456 aa).

One can recognise an MTTase N-terminal domain in the interval 13-129; it reads RYLYVRTFGC…IASLLEEVER (117 aa). [4Fe-4S] cluster contacts are provided by Cys22, Cys58, Cys92, Cys168, Cys172, and Cys175. In terms of domain architecture, Radical SAM core spans 154 to 384; it reads GTGDVVAQVT…QSIQADITLQ (231 aa). A TRAM domain is found at 387 to 450; the sequence is LAETGTVREV…SHSLKGELLS (64 aa).

It belongs to the methylthiotransferase family. MiaB subfamily. Monomer. It depends on [4Fe-4S] cluster as a cofactor.

It is found in the cytoplasm. The enzyme catalyses N(6)-dimethylallyladenosine(37) in tRNA + (sulfur carrier)-SH + AH2 + 2 S-adenosyl-L-methionine = 2-methylsulfanyl-N(6)-dimethylallyladenosine(37) in tRNA + (sulfur carrier)-H + 5'-deoxyadenosine + L-methionine + A + S-adenosyl-L-homocysteine + 2 H(+). In terms of biological role, catalyzes the methylthiolation of N6-(dimethylallyl)adenosine (i(6)A), leading to the formation of 2-methylthio-N6-(dimethylallyl)adenosine (ms(2)i(6)A) at position 37 in tRNAs that read codons beginning with uridine. This is tRNA-2-methylthio-N(6)-dimethylallyladenosine synthase from Syntrophobacter fumaroxidans (strain DSM 10017 / MPOB).